Here is a 568-residue protein sequence, read N- to C-terminus: NADPH oxidase 3 (568 aa).

The Cytoplasmic segment spans residues 1–13 (MMGCWILNEGLST). Residues 14 to 34 (ILVLSWLGINFYLFIDTFYWY) form a helical membrane-spanning segment. At 35–51 (EEEESFHYTRVILGSTL) the chain is on the extracellular side. Residues 52–72 (AWARASALCLNFNCMLILIPV) form a helical membrane-spanning segment. One can recognise a Ferric oxidoreductase domain in the interval 55–284 (RASALCLNFN…VVLYACERII (230 aa)). Topologically, residues 73–103 (SRNLISFIRGTSICCRGPWRRQLDKNLRFHK) are cytoplasmic. Residues 104–124 (LVAYGIAVNATIHIVAHFFNL) form a helical membrane-spanning segment. Over 125-167 (ERYHWSQSEEAQGLLAALSKLGNTPNESYLNPVRTFPTNTTTE) the chain is Extracellular. N-linked (GlcNAc...) asparagine glycosylation occurs at Asn-163. The chain crosses the membrane as a helical span at residues 168 to 188 (LLRTIAGVTGLVISLALVLIM). Residues 189–201 (TSSTEFIRQASYE) lie on the Cytoplasmic side of the membrane. The helical transmembrane segment at 202 to 222 (LFWYTHHVFIVFFLSLAIHGT) threads the bilayer. Residues 223-395 (GRIVRGQTQD…DGPFGTALTD (173 aa)) lie on the Extracellular side of the membrane. An N-linked (GlcNAc...) asparagine glycan is attached at Asn-238. Residues 285 to 395 (RFWRFQQEVV…DGPFGTALTD (111 aa)) enclose the FAD-binding FR-type domain. A helical membrane pass occupies residues 396–416 (VFHYPVCVCVAAGIGVTPFAA). The Cytoplasmic segment spans residues 417–568 (LLKSIWYKCS…VHFYYNKESF (152 aa)).

As to quaternary structure, interacts with CYBA/p22phox. Heterodimerization with CYBA/p22phox is essential for its activity and cell membrane localization. Heme is required as a cofactor. In terms of processing, N-glycosylated in a CYBA/p22phox-dependent manner.

The protein localises to the cell membrane. The catalysed reaction is NADPH + 2 O2 = 2 superoxide + NADP(+) + H(+). Activated by the ototoxic drug cisplatin. Activated by NOXO1. Cooperatively activated by NCF1 and NCF2 or NOXA1 in a phorbol 12-myristate 13-acetate (PMA)-dependent manner. Inhibited by diphenyleneiodonium chloride. Its function is as follows. NADPH oxidase that catalyzes the generation of superoxide from molecular oxygen utilizing NADPH as an electron donor, upon formation of a complex with CYBA/p22phox. Plays a role in the biogenesis of otoconia/otolith, which are crystalline structures of the inner ear involved in the perception of gravity. This is NADPH oxidase 3 (NOX3) from Homo sapiens (Human).